Here is a 236-residue protein sequence, read N- to C-terminus: DNA repair protein RecO (236 aa).

The protein belongs to the RecO family.

Its function is as follows. Involved in DNA repair and RecF pathway recombination. The sequence is that of DNA repair protein RecO from Photobacterium profundum (strain SS9).